The chain runs to 72 residues: Translation initiation factor IF-1 (72 aa).

The S1-like domain occupies 1-72 (MAKEDSIRMQ…NKGRIVYRER (72 aa)).

The protein belongs to the IF-1 family. In terms of assembly, component of the 30S ribosomal translation pre-initiation complex which assembles on the 30S ribosome in the order IF-2 and IF-3, IF-1 and N-formylmethionyl-tRNA(fMet); mRNA recruitment can occur at any time during PIC assembly.

Its subcellular location is the cytoplasm. Functionally, one of the essential components for the initiation of protein synthesis. Stabilizes the binding of IF-2 and IF-3 on the 30S subunit to which N-formylmethionyl-tRNA(fMet) subsequently binds. Helps modulate mRNA selection, yielding the 30S pre-initiation complex (PIC). Upon addition of the 50S ribosomal subunit IF-1, IF-2 and IF-3 are released leaving the mature 70S translation initiation complex. This chain is Translation initiation factor IF-1, found in Halorhodospira halophila (strain DSM 244 / SL1) (Ectothiorhodospira halophila (strain DSM 244 / SL1)).